The chain runs to 408 residues: Multidrug resistance protein MdtG (408 aa).

11 consecutive transmembrane segments (helical) span residues Leu-16 to Phe-36, Ile-58 to Ala-78, Leu-92 to Ile-112, Ala-115 to Val-135, Thr-146 to Ala-166, Pro-173 to Ile-193, Leu-224 to Leu-244, Val-253 to Leu-273, Ile-290 to Thr-310, Phe-319 to Asn-339, and Ala-378 to Leu-398.

The protein belongs to the major facilitator superfamily. DHA1 family. MdtG (TC 2.A.1.2.20) subfamily.

It is found in the cell inner membrane. Confers resistance to fosfomycin and deoxycholate. This Escherichia fergusonii (strain ATCC 35469 / DSM 13698 / CCUG 18766 / IAM 14443 / JCM 21226 / LMG 7866 / NBRC 102419 / NCTC 12128 / CDC 0568-73) protein is Multidrug resistance protein MdtG.